The chain runs to 1450 residues: Protein clueless (1450 aa).

2 disordered regions span residues 1–126 (MALE…PGSE) and 266–287 (KTRPDSVDCTPPEYVTPGVSEP). Residues 29-60 (NNSSAGKKQQQQQQPNQNQNLVNGNGNAADGP) show a composition bias toward low complexity. Positions 62 to 71 (AKKKGKKNRN) are enriched in basic residues. Ser271 carries the post-translational modification Phosphoserine. One can recognise a Clu domain in the interval 425–667 (RAEDAFSSKL…RTFPPDVNFL (243 aa)). Composition is skewed to basic and acidic residues over residues 725-734 (KQSEKTEEKA) and 743-765 (KESSETKEAEAEKPVEKKEEEKQ). Disordered stretches follow at residues 725–775 (KQSE…TKTA) and 959–1011 (PAVS…SDWT). The segment covering 968–983 (KKRSNGNKHNKHKSKG) has biased composition (basic residues). The segment covering 984-1008 (NKQQASGNQNGSSAGSSSGGSSSSS) has biased composition (low complexity). TPR repeat units follow at residues 1102–1135 (AYNFYTTGQAKIQQGMFKEGYELISEALNLLNNV), 1228–1261 (ALIDSNISLILHALGEYELSLRFIEHALKLNIKY), and 1263–1296 (GSKAMHVAFSYHLMARTQSCMGDFRSALNNEKET). The tract at residues 1410 to 1450 (NNNGDTEAETKDATKDNKDLAGASTQLTNGDKDAETAVASS) is disordered. Residues 1417-1428 (AETKDATKDNKD) show a composition bias toward basic and acidic residues.

Belongs to the CLU family.

It localises to the cytoplasm. In terms of biological role, mRNA-binding protein involved in proper cytoplasmic distribution of mitochondria. The chain is Protein clueless from Drosophila ananassae (Fruit fly).